The sequence spans 341 residues: Aspartate--ammonia ligase (341 aa).

This sequence belongs to the class-II aminoacyl-tRNA synthetase family. AsnA subfamily.

It is found in the cytoplasm. It carries out the reaction L-aspartate + NH4(+) + ATP = L-asparagine + AMP + diphosphate + H(+). Its pathway is amino-acid biosynthesis; L-asparagine biosynthesis; L-asparagine from L-aspartate (ammonia route): step 1/1. The polypeptide is Aspartate--ammonia ligase (Clostridium tetani (strain Massachusetts / E88)).